The chain runs to 503 residues: E3 ubiquitin-protein ligase ariadne-1 (503 aa).

The span at 1–11 shows a compositional bias: acidic residues; the sequence is MDSDNDNDFCD. Residues 1–40 are disordered; the sequence is MDSDNDNDFCDNVDSGNVSSGDDGDDDFGMEVDLPSSADR. The segment covering 12–21 has biased composition (low complexity); it reads NVDSGNVSSG. A TRIAD supradomain region spans residues 129–340; the sequence is QCEECEICFS…SSWYNCNRYD (212 aa). Zn(2+)-binding residues include cysteine 133, cysteine 136, cysteine 150, histidine 152, cysteine 155, cysteine 158, cysteine 178, cysteine 183, cysteine 223, cysteine 228, cysteine 244, cysteine 246, cysteine 251, cysteine 254, histidine 259, cysteine 264, cysteine 291, and cysteine 294. An RING-type 1 zinc finger spans residues 133-183; the sequence is CEICFSQLPPDSMAGLECGHRFCMPCWHEYLSTKIVAEGLGQTISCAAHGC. The interval 133–201 is important for interaction with Ubc10; that stretch reads CEICFSQLPP…VANLVTDARV (69 aa). The IBR-type zinc-finger motif lies at 203 to 264; it reads VKYQQLITNS…GENWHDPVKC (62 aa). An RING-type 2; atypical zinc finger spans residues 291-322; the sequence is CPRCSVTIEKDGGCNHMVCKNQNCKNEFCWVC. Cysteine 304 is an active-site residue. Cysteine 309, cysteine 314, cysteine 319, cysteine 322, histidine 329, and cysteine 336 together coordinate Zn(2+). Positions 341–361 form a coiled coil; sequence EDEAKTARDAQEKLRSSLARY.

It belongs to the RBR family. Ariadne subfamily. As to quaternary structure, can form homodimers. Interacts (via RING-type 1 zinc finger) with Ubc10. Interacts with the LINC complex member koi. Interacts with park. Interacts with ari-2. Specifically interacts with isoform ECR-A of EcR. Autophosphorylated. In terms of tissue distribution, widely expressed, with prominent levels in the nervous system and female gonads.

It localises to the cytoplasm. The protein localises to the nucleus. The enzyme catalyses [E2 ubiquitin-conjugating enzyme]-S-ubiquitinyl-L-cysteine + [acceptor protein]-L-lysine = [E2 ubiquitin-conjugating enzyme]-L-cysteine + [acceptor protein]-N(6)-ubiquitinyl-L-lysine.. In terms of biological role, atypical E3 ubiquitin-protein ligase, which catalyzes ubiquitination of target proteins together with ubiquitin-conjugating enzyme E2 Ubc10. Controls the subcellular localization and morphology of muscle nuclei (myonuclei) by regulating the protein levels and distribution of the LINC (LInker of Nucleoskeleton and Cytoskeleton) complex. Functions by mediating the monoubiquitination of the LINC complex subunit koi leading to its subsequent proteasomal degradation. Appears to function, at least partially redundantly, with the RBR E3 ligase family member park in nuclear localization and morphology. Likely to function in metamorphosis by regulating the proteins levels of EcR isoform A (ECR-A) and its heterodimeric partner usp, via the ubiquitination and subsequent degradation of ECR-A. In Drosophila melanogaster (Fruit fly), this protein is E3 ubiquitin-protein ligase ariadne-1.